The primary structure comprises 399 residues: P2X purinoceptor 1 (399 aa).

The Cytoplasmic portion of the chain corresponds to 1-28 (MARRLQDELSAFFFEYDTPRMVLVRNKK). A helical membrane pass occupies residues 29–50 (VGVIFRLIQLVVLVYVIGWVFV). Over 51–338 (YEKGYQTSSD…IPTMTTIGSG (288 aa)) the chain is Extracellular. Residues Lys-68, Lys-70, and Lys-140 each coordinate CTP. Lys-70 is a binding site for ATP. 3 disulfide bridges follow: Cys-117–Cys-165, Cys-126–Cys-149, and Cys-132–Cys-159. 2 N-linked (GlcNAc...) asparagine glycosylation sites follow: Asn-153 and Asn-184. Thr-186 is a binding site for CTP. Thr-186 contacts ATP. A glycan (N-linked (GlcNAc...) asparagine) is linked at Asn-210. Cystine bridges form between Cys-217/Cys-227 and Cys-261/Cys-270. 3 residues coordinate ATP: Ser-286, Asn-290, and Arg-292. CTP contacts are provided by Asn-290 and Arg-292. An N-linked (GlcNAc...) asparagine glycan is attached at Asn-300. Residue Lys-309 coordinates CTP. Residue Lys-309 participates in ATP binding. Residues 331–338 (TMTTIGSG) are pore-forming motif. The helical transmembrane segment at 339 to 358 (IGIFGVATVLCDLLLLHILP) threads the bilayer. Residues 359–399 (KRHYYKQKKFKYAEDMGPGEGEHDPVATSSTLGLQENMRTS) are Cytoplasmic-facing. Residues 374–399 (MGPGEGEHDPVATSSTLGLQENMRTS) are disordered. The segment covering 385–399 (ATSSTLGLQENMRTS) has biased composition (polar residues). Ser-387 and Ser-388 each carry phosphoserine. Thr-389 is subject to Phosphothreonine.

It belongs to the P2X receptor family. In terms of assembly, functional P2XRs are organized as homomeric and heteromeric trimers. Homotrimer. Forms heterodimer with P2RX2. Forms heterodimer with P2RX4. Forms heterodimer with P2RX5. High levels in vas deferens and urinary bladder. Lower extent in spinal cord, coeliac ganglion, lung and spleen (probably in the smooth muscle part of both organs).

Its subcellular location is the cell membrane. The enzyme catalyses Ca(2+)(in) = Ca(2+)(out). It carries out the reaction K(+)(in) = K(+)(out). It catalyses the reaction Na(+)(in) = Na(+)(out). Its activity is regulated as follows. Activated by low concentrations of ATP (&lt;1 uM). Undergoes rapid desensitisation. Sensitives to the ATP agonist:alpha/beta-methylene-ATP. Modulated by cholesterol. Its function is as follows. ATP-gated nonselective transmembrane cation channel permeable to potassium, sodium and with relatively high calcium permeability. Furthermore, CTP functions as a weak affinity agonist for P2RX1. Plays a role a role in urogenital, immune and cardiovascular function. Specifically, plays an important role in neurogenic contraction of smooth muscle of the vas deferens, and therefore is essential for normal male reproductive function. In addition, contributes to smooth muscle contractions of the urinary bladder. On platelets, contributes to platelet activation and aggregation and thereby, also to thrombosis. On neutrophils, it is involved in chemotaxis and in mitigating the activation of circulating cells. The chain is P2X purinoceptor 1 (P2rx1) from Rattus norvegicus (Rat).